The primary structure comprises 271 residues: Signal recognition particle receptor subunit beta (271 aa).

The helical transmembrane segment at 37–57 threads the bilayer; it reads LLSVVVAVLAVLLTLVFWKLI. GTP is bound by residues 71 to 79 and 92 to 95; these read GLCDSGKTL and TQTS. Ser-112 bears the Phosphoserine mark. A GTP-binding site is contributed by Gly-120. Thr-214 carries the post-translational modification Phosphothreonine. Ala-248 lines the GTP pocket.

This sequence belongs to the SRP receptor beta subunit family. Heterodimer with SRPRA.

It is found in the endoplasmic reticulum membrane. In terms of biological role, component of the signal recognition particle (SRP) complex receptor (SR). Ensures, in conjunction with the SRP complex, the correct targeting of the nascent secretory proteins to the endoplasmic reticulum membrane system. May mediate the membrane association of SR. The chain is Signal recognition particle receptor subunit beta (SRPRB) from Homo sapiens (Human).